The sequence spans 163 residues: R-phycoerythrin alpha chain (163 aa).

Cys82 and Cys139 together coordinate (2R,3E)-phycoerythrobilin.

The protein belongs to the phycobiliprotein family. In terms of assembly, heterodimer of an alpha and a beta chain. Post-translationally, contains two covalently linked bilin chromophores.

Its subcellular location is the plastid. The protein localises to the chloroplast thylakoid membrane. In terms of biological role, light-harvesting photosynthetic bile pigment-protein from the phycobiliprotein complex. The sequence is that of R-phycoerythrin alpha chain (cpeA) from Aglaothamnion neglectum (Red alga).